A 233-amino-acid polypeptide reads, in one-letter code: LexA repressor (233 aa).

Positions 26–46 (FDEMKEALDLRSKSGIHRLIT) form a DNA-binding region, H-T-H motif. Active-site for autocatalytic cleavage activity residues include Ser-154 and Lys-192.

The protein belongs to the peptidase S24 family. As to quaternary structure, homodimer.

The enzyme catalyses Hydrolysis of Ala-|-Gly bond in repressor LexA.. Functionally, represses a number of genes involved in the response to DNA damage (SOS response), including recA and lexA. In the presence of single-stranded DNA, RecA interacts with LexA causing an autocatalytic cleavage which disrupts the DNA-binding part of LexA, leading to derepression of the SOS regulon and eventually DNA repair. This is LexA repressor from Roseobacter denitrificans (strain ATCC 33942 / OCh 114) (Erythrobacter sp. (strain OCh 114)).